A 71-amino-acid polypeptide reads, in one-letter code: Vitellogenin-B1 (71 aa).

An N-terminal signal peptide occupies residues 1 to 15 (MRGIILAQLLALAGS). The region spanning 24–71 (FSESKPYVYNYEGIILNGIPENGLARSGIKLNCKAEISGYAQRSYMLK) is the Vitellogenin domain.

As to expression, produced by the liver, secreted into the blood and then sequestered by receptor mediated endocytosis into growing oocytes, where it is generally cleaved, giving rise to the respective yolk components.

Its function is as follows. Precursor of the major egg-yolk proteins that are sources of nutrients during early development of oviparous organisms. In Xenopus laevis (African clawed frog), this protein is Vitellogenin-B1.